Here is a 265-residue protein sequence, read N- to C-terminus: 5'-nucleotidase SurE (265 aa).

A divalent metal cation is bound by residues D11, D12, S43, and N101.

This sequence belongs to the SurE nucleotidase family. A divalent metal cation is required as a cofactor.

It is found in the cytoplasm. It catalyses the reaction a ribonucleoside 5'-phosphate + H2O = a ribonucleoside + phosphate. Its function is as follows. Nucleotidase that shows phosphatase activity on nucleoside 5'-monophosphates. The sequence is that of 5'-nucleotidase SurE from Synechococcus sp. (strain CC9311).